The chain runs to 420 residues: Histidine--tRNA ligase (420 aa).

It belongs to the class-II aminoacyl-tRNA synthetase family. Homodimer.

The protein resides in the cytoplasm. It catalyses the reaction tRNA(His) + L-histidine + ATP = L-histidyl-tRNA(His) + AMP + diphosphate + H(+). This Staphylococcus saprophyticus subsp. saprophyticus (strain ATCC 15305 / DSM 20229 / NCIMB 8711 / NCTC 7292 / S-41) protein is Histidine--tRNA ligase.